The following is a 419-amino-acid chain: Tol-Pal system protein TolB (419 aa).

Residues 1–19 (MFNRIISLFLLLFTGQVIA) form the signal peptide.

This sequence belongs to the TolB family. The Tol-Pal system is composed of five core proteins: the inner membrane proteins TolA, TolQ and TolR, the periplasmic protein TolB and the outer membrane protein Pal. They form a network linking the inner and outer membranes and the peptidoglycan layer.

It localises to the periplasm. In terms of biological role, part of the Tol-Pal system, which plays a role in outer membrane invagination during cell division and is important for maintaining outer membrane integrity. The sequence is that of Tol-Pal system protein TolB from Legionella pneumophila subsp. pneumophila (strain Philadelphia 1 / ATCC 33152 / DSM 7513).